The following is a 334-amino-acid chain: MTPLDAKRPLQLNDQGQLRHFLSLDGLNRELLTEILDTADSFLEVGARAVKKVPLLRGKTVCNVFFENSTRTRTTFELAAQRLSADVITLNVSTSSASKGETLLDTLRNLEAMAADMFVVRHGDSGAAHFIAEHVCPQVAIINGGDGRHAHPTQGMLDMLTIRRHKGGFENLSVAIVGDILHSRVARSNMLALKTLGCPDIRVIAPKTLLPIGIEQYGVKVYTDMTEGLKDVDVVIMLRLQRERMQGGLLPSEGEFYRLFGLTTARLAGAKPDAIVMHPGPINRGVEIESAVADGPHSVILNQVTYGIAVRMAVLSMAMSGQTAQRQFEQENAQ.

Residues Arg71 and Thr72 each contribute to the carbamoyl phosphate site. Lys99 lines the L-aspartate pocket. Arg121, His151, and Gln154 together coordinate carbamoyl phosphate. 2 residues coordinate L-aspartate: Arg184 and Arg239. Carbamoyl phosphate is bound by residues Gly280 and Pro281.

It belongs to the aspartate/ornithine carbamoyltransferase superfamily. ATCase family. In terms of assembly, heterododecamer (2C3:3R2) of six catalytic PyrB chains organized as two trimers (C3), and six regulatory PyrI chains organized as three dimers (R2).

It carries out the reaction carbamoyl phosphate + L-aspartate = N-carbamoyl-L-aspartate + phosphate + H(+). Its pathway is pyrimidine metabolism; UMP biosynthesis via de novo pathway; (S)-dihydroorotate from bicarbonate: step 2/3. Its function is as follows. Catalyzes the condensation of carbamoyl phosphate and aspartate to form carbamoyl aspartate and inorganic phosphate, the committed step in the de novo pyrimidine nucleotide biosynthesis pathway. The polypeptide is Aspartate carbamoyltransferase catalytic subunit (Pseudomonas fluorescens (strain ATCC BAA-477 / NRRL B-23932 / Pf-5)).